We begin with the raw amino-acid sequence, 547 residues long: Inositol-tetrakisphosphate 1-kinase 6 (547 aa).

Lysine 263 serves as a coordination point for 1D-myo-inositol 1,3,4-trisphosphate. The ATP site is built by arginine 317 and lysine 370. The ATP-grasp domain occupies 327-539 (LEGLSAEGRP…FWDAIKQSYE (213 aa)). 1D-myo-inositol 1,3,4-trisphosphate-binding residues include histidine 381 and lysine 415. Residues 404–415 (QEYIDHGSKIFK), serine 430, and serine 450 each bind ATP. Mg(2+) contacts are provided by aspartate 497, aspartate 511, and asparagine 513. Positions 513 and 517 each coordinate 1D-myo-inositol 1,3,4-trisphosphate.

This sequence belongs to the ITPK1 family. As to quaternary structure, monomer. The cofactor is Mg(2+). In terms of tissue distribution, highly expressed in embryos and at lower levels in roots, leaves, flowers and anthers.

It carries out the reaction 1D-myo-inositol 3,4,5,6-tetrakisphosphate + ATP = 1D-myo-inositol 1,3,4,5,6-pentakisphosphate + ADP + H(+). The enzyme catalyses 1D-myo-inositol 1,3,4-trisphosphate + ATP = 1D-myo-inositol 1,3,4,5-tetrakisphosphate + ADP + H(+). The catalysed reaction is 1D-myo-inositol 1,3,4-trisphosphate + ATP = 1D-myo-inositol 1,3,4,6-tetrakisphosphate + ADP + H(+). Its function is as follows. Kinase that can phosphorylate various inositol polyphosphate such as Ins(3,4,5,6)P4 or Ins(1,3,4)P3 and participates in phytic acid biosynthesis in developing seeds. Phytic acid is the primary storage form of phosphorus in cereal grains and other plant seeds. The protein is Inositol-tetrakisphosphate 1-kinase 6 (ITPK6) of Oryza sativa subsp. japonica (Rice).